Consider the following 300-residue polypeptide: uncharacterized protein (300 aa).

It belongs to the chlamydial CPn_0593/CT_474/TC_0759 family.

This is an uncharacterized protein from Chlamydia muridarum (strain MoPn / Nigg).